A 291-amino-acid polypeptide reads, in one-letter code: Protein ILRUN (291 aa).

A disordered region spans residues 199–291; it reads NTQPHRKVEG…LHGPYPFGQS (93 aa). The segment covering 212–228 has biased composition (polar residues); that stretch reads PFASPQKNRQSDENNLT. Phosphoserine is present on residues serine 215, serine 222, and serine 265. Over residues 257–276 the composition is skewed to low complexity; that stretch reads LSQSSVNLSPSSPANNLSVV.

Interacts with IRF3; the interaction inhibits IRF3 binding to its DNA consensus sequence.

It is found in the cytoplasm. The protein localises to the nucleus. Functionally, negative regulator of innate antiviral response. Blocks IRF3-dependent cytokine production such as IFNA, IFNB and TNF. Interacts with IRF3 and inhibits IRF3 recruitment to type I IFN promoter sequences while also reducing nuclear levels of the coactivators EP300 and CREBBP. This Mus musculus (Mouse) protein is Protein ILRUN.